Reading from the N-terminus, the 268-residue chain is Putative hydro-lyase PSPTO_5379 (268 aa).

The protein belongs to the D-glutamate cyclase family.

In Pseudomonas syringae pv. tomato (strain ATCC BAA-871 / DC3000), this protein is Putative hydro-lyase PSPTO_5379.